Consider the following 488-residue polypeptide: Katanin p60 ATPase-containing subunit A-like 1 (488 aa).

The tract at residues 84-184 (FPNPVPEEGP…EQKKFDGTGY (101 aa)) is disordered. A compositionally biased stretch (basic and acidic residues) spans 144 to 167 (KPDRPNTRDGRGNKAKEEKSKRNA). 246-253 (GPPGTGKT) is a binding site for ATP.

It belongs to the AAA ATPase family. Katanin p60 subunit A1 subfamily. A-like 1 sub-subfamily.

Its subcellular location is the cytoplasm. It localises to the cytoskeleton. The protein resides in the spindle pole. It is found in the spindle. It carries out the reaction n ATP + n H2O + a microtubule = n ADP + n phosphate + (n+1) alpha/beta tubulin heterodimers.. Its function is as follows. Regulates microtubule dynamics in Sertoli cells, a process that is essential for spermiogenesis and male fertility. Severs microtubules in an ATP-dependent manner, promoting rapid reorganization of cellular microtubule arrays. The chain is Katanin p60 ATPase-containing subunit A-like 1 (katnal1) from Danio rerio (Zebrafish).